A 132-amino-acid polypeptide reads, in one-letter code: Large ribosomal subunit protein uL22 (132 aa).

This sequence belongs to the universal ribosomal protein uL22 family. In terms of assembly, part of the 50S ribosomal subunit.

This protein binds specifically to 23S rRNA; its binding is stimulated by other ribosomal proteins, e.g. L4, L17, and L20. It is important during the early stages of 50S assembly. It makes multiple contacts with different domains of the 23S rRNA in the assembled 50S subunit and ribosome. In terms of biological role, the globular domain of the protein is located near the polypeptide exit tunnel on the outside of the subunit, while an extended beta-hairpin is found that lines the wall of the exit tunnel in the center of the 70S ribosome. The chain is Large ribosomal subunit protein uL22 from Pelagibacter ubique (strain HTCC1062).